Here is a 156-residue protein sequence, read N- to C-terminus: Small ribosomal subunit protein uS7 (156 aa).

Belongs to the universal ribosomal protein uS7 family. In terms of assembly, part of the 30S ribosomal subunit. Contacts proteins S9 and S11.

One of the primary rRNA binding proteins, it binds directly to 16S rRNA where it nucleates assembly of the head domain of the 30S subunit. Is located at the subunit interface close to the decoding center, probably blocks exit of the E-site tRNA. This chain is Small ribosomal subunit protein uS7, found in Desulfitobacterium hafniense (strain DSM 10664 / DCB-2).